The chain runs to 87 residues: Diazepam-binding inhibitor-like 5 (87 aa).

The ACB domain maps to 2–87; the sequence is SQVEFEMACA…VEELKKKEPC (86 aa). An acyl-CoA is bound by residues 29 to 33, K55, and Y74; that span reads YSFYK.

Belongs to the ACBP family. As to expression, exclusively expressed in late spermatids and spermatozoa. Not found in epididymis, spleen, bone marrow, skin, liver, brain, heart, kidney, muscle.

It localises to the cytoplasm. May be involved in the energy metabolism of the mature sperm. In Mus musculus (Mouse), this protein is Diazepam-binding inhibitor-like 5 (Dbil5).